An 858-amino-acid chain; its full sequence is MNPTDLHPIKERMQAARAAAIADFRQHLRPDPLLSELRRIVDQALRDLLKLCPLPAGATLAAVGGYGRGELYPHSDVDLLILLPRAPDGPDESAIETLVASLWDLGLEPGHSVRTLAECETEASADITVETALLESRWLAGSRSLMKQFETAMTARLDARAFFRAKRVEMQQRHARYQDTPYALEPNSKESPGGLRDLQVILWMARAAGFGRNWRAVAQAGLLTAPEARDLRRAEQAFKRLRIELHLLTRRREDRLLFDLQPTLAEVYGIATTTTRRASELLMQRYYWAARLVTQLNVILIQNIEERLFPRPESDARAIDEEFRSLHGRLDIIREDCFERNPTLLLRAFLVMQQHPGLSGMSARTLRAIWHSRHRIDAQFRRNPVNRKLFLQILQQPRGIVHELRRMTMLNILPRYLPVFRRIVGQMQHDLFHVYTVDQHTLAVIRNLRRFTMPEHASEYPLASQVMAGLDRHWLLYVAALFHDIAKGRGGDHSELGARDARRFAQEHGLAPEDAELVEFLVRQHLLMSAVAQKRDLSDPEVINEFARQVKDERHLNALYLLTVADIRGTSPKVWNAWKGKLLEDLYRLTLAALGGAQDTRTVLAERKEEAARLLRLAGLRDDARDAFWQQLDVAYFLRHDASEIAWHTRHLYYQVQPDKPVVKVRPTEEGSGLQIMVYTRDTPDLFMNTCAYFDGKAFSIQDARIHTTRQGWALDSFIVLPAEPLADLRAQAALVEHELAERLRQAQGGARLADVRVFHRNRQSRVSRVFPVMPQAELHPDERSQSWRLSVTATDRPGLLHALARVMAENGVNLIMAKIMTLGDRVEDVFIISGAVLERPRTQMQFEHAVLDALAGE.

The uridylyltransferase stretch occupies residues 1 to 318 (MNPTDLHPIK…FPRPESDARA (318 aa)). The tract at residues 319-674 (IDEEFRSLHG…VRPTEEGSGL (356 aa)) is uridylyl-removing. Residues 437-559 (VDQHTLAVIR…VKDERHLNAL (123 aa)) enclose the HD domain. ACT domains lie at 675-756 (QIMV…LADV) and 789-858 (RLSV…LAGE).

Belongs to the GlnD family. The cofactor is Mg(2+).

It catalyses the reaction [protein-PII]-L-tyrosine + UTP = [protein-PII]-uridylyl-L-tyrosine + diphosphate. The enzyme catalyses [protein-PII]-uridylyl-L-tyrosine + H2O = [protein-PII]-L-tyrosine + UMP + H(+). Uridylyltransferase (UTase) activity is inhibited by glutamine, while glutamine activates uridylyl-removing (UR) activity. Modifies, by uridylylation and deuridylylation, the PII regulatory proteins (GlnB and homologs), in response to the nitrogen status of the cell that GlnD senses through the glutamine level. Under low glutamine levels, catalyzes the conversion of the PII proteins and UTP to PII-UMP and PPi, while under higher glutamine levels, GlnD hydrolyzes PII-UMP to PII and UMP (deuridylylation). Thus, controls uridylylation state and activity of the PII proteins, and plays an important role in the regulation of nitrogen assimilation and metabolism. This is Bifunctional uridylyltransferase/uridylyl-removing enzyme from Bordetella avium (strain 197N).